Here is a 496-residue protein sequence, read N- to C-terminus: UDP-glycosyltransferase 73C4 (496 aa).

UDP-alpha-D-glucose is bound by residues S297, 357–359 (SPQ), 374–382 (HCGWNSTLE), and 396–399 (FGDQ). Positions 450–475 (SDDAKERRRRVKELGESAHKAVEEGG) are disordered. A compositionally biased stretch (basic and acidic residues) spans 451–472 (DDAKERRRRVKELGESAHKAVE).

The protein belongs to the UDP-glycosyltransferase family.

In Arabidopsis thaliana (Mouse-ear cress), this protein is UDP-glycosyltransferase 73C4 (UGT73C4).